The chain runs to 171 residues: Lipoprotein signal peptidase (171 aa).

4 helical membrane-spanning segments follow: residues 15–35, 47–67, 72–92, and 107–127; these read WLWL…IVMD, VLPF…SFLS, WQRW…AYWM, and ALII…GFVV. Catalysis depends on residues aspartate 128 and aspartate 146. Residues 141 to 161 traverse the membrane as a helical segment; that stretch reads AFNLADSTICIGAAMIILDGF.

Belongs to the peptidase A8 family.

The protein localises to the cell inner membrane. The catalysed reaction is Release of signal peptides from bacterial membrane prolipoproteins. Hydrolyzes -Xaa-Yaa-Zaa-|-(S,diacylglyceryl)Cys-, in which Xaa is hydrophobic (preferably Leu), and Yaa (Ala or Ser) and Zaa (Gly or Ala) have small, neutral side chains.. Its pathway is protein modification; lipoprotein biosynthesis (signal peptide cleavage). This protein specifically catalyzes the removal of signal peptides from prolipoproteins. The chain is Lipoprotein signal peptidase from Vibrio cholerae serotype O1 (strain ATCC 39315 / El Tor Inaba N16961).